Reading from the N-terminus, the 303-residue chain is Golgi to ER traffic protein 2 (303 aa).

Topologically, residues 1–168 (MSEQPLSQDE…NAYNIYQQRL (168 aa)) are cytoplasmic. A disordered region spans residues 19–86 (RQAKMARGKA…DPEDDPDLMD (68 aa)). The span at 31–48 (RLNNILSQGSSVKGTTDP) shows a compositional bias: polar residues. The chain crosses the membrane as a helical span at residues 169–189 (WKFRFSIIRFAAVLTNFFYHY). Residues 190-216 (LTIQDYSFTSSPHFYVRALAPHPAVNS) are Lumenal-facing. A helical membrane pass occupies residues 217 to 236 (FITWFSTCEVAILASFYLIT). Residues 237–280 (SKNNIYANASDGNLLLKGISMGAMVLPQLRAYQPLVIRLAHYWE) are Cytoplasmic-facing. The helical transmembrane segment at 281 to 301 (VFSMLLGDIFLVVVLFGLVSI) threads the bilayer. Residues 302–303 (YN) are Lumenal-facing.

This sequence belongs to the GET2 family. As to quaternary structure, component of the Golgi to ER traffic (GET) complex, which is composed of GET1, GET2 and GET3. Within the complex, GET1 and GET2 form a heterotetramer which is stabilized by phosphatidylinositol binding and which binds to the GET3 homodimer.

Its subcellular location is the endoplasmic reticulum membrane. The protein resides in the golgi apparatus membrane. In terms of biological role, required for the post-translational delivery of tail-anchored (TA) proteins to the endoplasmic reticulum. Together with GET1, acts as a membrane receptor for soluble GET3, which recognizes and selectively binds the transmembrane domain of TA proteins in the cytosol. The GET complex cooperates with the HDEL receptor ERD2 to mediate the ATP-dependent retrieval of resident ER proteins that contain a C-terminal H-D-E-L retention signal from the Golgi to the ER. The polypeptide is Golgi to ER traffic protein 2 (Debaryomyces hansenii (strain ATCC 36239 / CBS 767 / BCRC 21394 / JCM 1990 / NBRC 0083 / IGC 2968) (Yeast)).